The chain runs to 220 residues: 7-cyano-7-deazaguanine synthase (220 aa).

Position 7 to 17 (7 to 17 (LSGGLDSAVCL)) interacts with ATP. Zn(2+) is bound by residues Cys-191, Cys-199, Cys-202, and Cys-205.

It belongs to the QueC family. In terms of assembly, homodimer. It depends on Zn(2+) as a cofactor.

The enzyme catalyses 7-carboxy-7-deazaguanine + NH4(+) + ATP = 7-cyano-7-deazaguanine + ADP + phosphate + H2O + H(+). It participates in purine metabolism; 7-cyano-7-deazaguanine biosynthesis. In terms of biological role, catalyzes the ATP-dependent conversion of 7-carboxy-7-deazaguanine (CDG) to 7-cyano-7-deazaguanine (preQ(0)). This Desulforudis audaxviator (strain MP104C) protein is 7-cyano-7-deazaguanine synthase.